The sequence spans 484 residues: Trigger factor (484 aa).

Residues 162 to 243 form the PPIase FKBP-type domain; that stretch reads GDFISIDLSA…VKSVKERELP (82 aa). The disordered stretch occupies residues 427–484; it reads DGNTIDTSEFFGKPPENDVTDLLDDDADGDAGVDADGDTENSAEPADADSADAAQGAG. Residues 444–476 are compositionally biased toward acidic residues; that stretch reads DVTDLLDDDADGDAGVDADGDTENSAEPADADS.

It belongs to the FKBP-type PPIase family. Tig subfamily.

It is found in the cytoplasm. The catalysed reaction is [protein]-peptidylproline (omega=180) = [protein]-peptidylproline (omega=0). Its function is as follows. Involved in protein export. Acts as a chaperone by maintaining the newly synthesized protein in an open conformation. Functions as a peptidyl-prolyl cis-trans isomerase. The sequence is that of Trigger factor from Mycobacterium marinum (strain ATCC BAA-535 / M).